A 264-amino-acid polypeptide reads, in one-letter code: Homeobox protein vent1 (264 aa).

Basic and acidic residues-rich tracts occupy residues 16-26 and 44-59; these read KEEATDGKDSM and YAKE…DVQE. The disordered stretch occupies residues 16–140; sequence KEEATDGKDS…RLRTAFTPQQ (125 aa). The segment covering 60-80 has biased composition (polar residues); that stretch reads HTTSFQCSLGEQVINRPSANP. The segment covering 117 to 130 has biased composition (basic and acidic residues); the sequence is TEQREKSPKSDLQR. The homeobox DNA-binding region spans 129–188; that stretch reads QRRLRTAFTPQQISKLEQAFNKQRYLGAPERKKLATSLQLSEIQVKTWFQNRRMKLKRQI.

Expressed in the ventral marginal zone of gastrulae. At stage 11.5, also expressed in the ventral region of the animal cap (ectoderm). At the end of gastrulation, predominantly localized to the ventral and lateral regions of the closing slit blastopore. At early tail bud stage, expression is maintained only in the forming proctodeum.

It localises to the nucleus. In terms of biological role, transcriptional repressor. Cooperates with vent2 in a ventral signaling pathway downstream of bmp4, which antagonizes the Spemann organizer and dorsal mesoderm formation, and leads to ventral mesoderm formation. Acts downstream of bmp4 to repress transcription of foxa4-B/XFD-1'. Binds to DNA with preference for the target sequence 5'-CTATT[T/C]G-3'. Also binds 5'-TGCATTTTG-3' at a lower frequency, and occasionally 5'-TTGATC-3'. Binds to the homeobox 2 (HBX2) repressor element in the promoter of the myf5 gene and represses myf5 transcription in the ventral domain. This chain is Homeobox protein vent1 (vent1), found in Xenopus laevis (African clawed frog).